The primary structure comprises 891 residues: Kinesin-like protein KIN-UB (891 aa).

The segment at 1–54 (MSGKVANATPKAAAGKPRLSAAGGGAYRRTSSGPLPSAGGGGGRASSESGVSSR) is disordered. Residues 45–54 (ASSESGVSSR) are compositionally biased toward low complexity. The 347-residue stretch at 54 to 400 (RVRVAVRLRP…IMFGQRAMKV (347 aa)) folds into the Kinesin motor domain. 139-146 (GQTGTGKT) lines the ATP pocket. The D-BOX signature appears at 370-378 (RTSLVVTIG). A coiled-coil region spans residues 502–592 (TSSEVGEVQN…ADETRRSLDR (91 aa)). The segment covering 586–595 (TRRSLDRGDG) has biased composition (basic and acidic residues). Residues 586–626 (TRRSLDRGDGSGKIFPGFDSLMSHSRNSQPREQSNGPKPPI) form a disordered region. Polar residues predominate over residues 607–621 (MSHSRNSQPREQSNG). ARM repeat units lie at residues 623-662 (KPPI…NLAA), 664-704 (EANQ…NLAM), 706-746 (ETNQ…NLCG), and 748-787 (DKLQ…NFAK).

Belongs to the TRAFAC class myosin-kinesin ATPase superfamily. Kinesin family. Ungrouped subfamily.

The protein resides in the cytoplasm. Its subcellular location is the cytoskeleton. The sequence is that of Kinesin-like protein KIN-UB from Oryza sativa subsp. japonica (Rice).